Consider the following 370-residue polypeptide: Peridinin-chlorophyll a-binding protein 1, chloroplastic (370 aa).

The transit peptide at 1 to 57 (MVRSGKKAVVLAAVAFCATSVVQKSHGFVPSPLRQRAAAAGAAAASAATMFAPAAFA) directs the protein to the chloroplast. 2 consecutive repeat copies span residues 58–220 (DEIG…VPSG) and 221–370 (DKIG…AAQR).

As to quaternary structure, homotrimer.

The protein resides in the plastid. It localises to the chloroplast. In terms of biological role, water-soluble antenna for capture of solar energy in the blue-green range. Peridinin is an asymmetric carotenoid. In Amphidinium carterae (Dinoflagellate), this protein is Peridinin-chlorophyll a-binding protein 1, chloroplastic.